Here is an 862-residue protein sequence, read N- to C-terminus: Genome polyprotein (862 aa).

The N-myristoyl glycine; by host moiety is linked to residue Gly-2.

The protein belongs to the picornaviruses polyprotein family. As to quaternary structure, interacts with capsid protein VP1 and capsid protein VP3 to form heterotrimeric protomers. In terms of assembly, interacts with capsid protein VP0, and capsid protein VP3 to form heterotrimeric protomers. Five protomers subsequently associate to form pentamers which serve as building blocks for the capsid. Interacts with capsid protein VP2, capsid protein VP3 and capsid protein VP4 following cleavage of capsid protein VP0. Interacts with capsid protein VP1 and capsid protein VP3 in the mature capsid. As to quaternary structure, interacts with capsid protein VP0 and capsid protein VP1 to form heterotrimeric protomers. Five protomers subsequently associate to form pentamers which serve as building blocks for the capsid. Interacts with capsid protein VP4 in the mature capsid. Interacts with protein 2C; this interaction may be important for virion morphogenesis. In terms of assembly, interacts with capsid protein VP1 and capsid protein VP3. In terms of processing, specific enzymatic cleavages in vivo by the viral proteases yield processing intermediates and the mature proteins. Post-translationally, myristoylation is required for the formation of pentamers during virus assembly. Further assembly of 12 pentamers and a molecule of genomic RNA generates the provirion. During virion maturation, immature virions are rendered infectious following cleavage of VP0 into VP4 and VP2. This maturation seems to be an autocatalytic event triggered by the presence of RNA in the capsid and it is followed by a conformational change infectious virion. In terms of processing, myristoylation is required during RNA encapsidation and formation of the mature virus particle.

Its subcellular location is the virion. It is found in the host cytoplasm. Functionally, forms an icosahedral capsid of pseudo T=3 symmetry with capsid proteins VP2 and VP3. The capsid is 300 Angstroms in diameter, composed of 60 copies of each capsid protein and enclosing the viral positive strand RNA genome. Capsid protein VP1 mainly forms the vertices of the capsid. Capsid protein VP1 interacts with host cell receptor to provide virion attachment to target host cells. This attachment induces virion internalization. Tyrosine kinases are probably involved in the entry process. After binding to its receptor, the capsid undergoes conformational changes. Capsid protein VP1 N-terminus (that contains an amphipathic alpha-helix) and capsid protein VP4 are externalized. Together, they shape a pore in the host membrane through which viral genome is translocated to host cell cytoplasm. Forms an icosahedral capsid of pseudo T=3 symmetry with capsid proteins VP2 and VP3. The capsid is 300 Angstroms in diameter, composed of 60 copies of each capsid protein and enclosing the viral positive strand RNA genome. In terms of biological role, lies on the inner surface of the capsid shell. After binding to the host receptor, the capsid undergoes conformational changes. Capsid protein VP4 is released, Capsid protein VP1 N-terminus is externalized, and together, they shape a pore in the host membrane through which the viral genome is translocated into the host cell cytoplasm. Its function is as follows. Component of immature procapsids, which is cleaved into capsid proteins VP4 and VP2 after maturation. Allows the capsid to remain inactive before the maturation step. The sequence is that of Genome polyprotein from Echovirus 16 (strain Harrington).